Consider the following 751-residue polypeptide: Conserved oligomeric Golgi complex subunit 5 (751 aa).

Disordered stretches follow at residues Met1–Asp21 and Ser244–Gln263.

The protein belongs to the COG5 family. Component of the conserved oligomeric Golgi complex which is composed of eight different subunits and is required for normal Golgi morphology and localization.

It localises to the golgi apparatus membrane. Its function is as follows. Required for normal Golgi function and necessary during spermatogenesis. Required for cleavage furrow ingression during cytokinesis in dividing spermatocytes and for the extensive polarized cell growth that accompanies spermatid elongation. In Drosophila melanogaster (Fruit fly), this protein is Conserved oligomeric Golgi complex subunit 5 (fws).